Reading from the N-terminus, the 601-residue chain is Beta-phellandrene synthase (601 aa).

The transit peptide at 1-35 directs the protein to the chloroplast; that stretch reads MSTISIHHVGILRNPLPSKNKRALINNPWSLSLPR. Mn(2+) contacts are provided by D356 and D360. The DDXXD motif signature appears at 356-360; that stretch reads DDVYD. 2 homodimerization regions span residues 362-368 and 434-471; these read YGTLDEL and EAKW…LSIP. Residues D499 and E507 each contribute to the Mn(2+) site.

It belongs to the terpene synthase family. In terms of assembly, homodimer. It depends on Mn(2+) as a cofactor. The cofactor is Mg(2+). In terms of tissue distribution, expressed in peltate glandular trichomes. Present at low levels in flowers, leaves and stems.

The protein resides in the plastid. The protein localises to the chloroplast. It catalyses the reaction (2E)-geranyl diphosphate = beta-phellandrene + diphosphate. The enzyme catalyses (2E)-geranyl diphosphate = (1R,5R)-sabinene + diphosphate. Its pathway is secondary metabolite biosynthesis; terpenoid biosynthesis. In terms of biological role, involved in the biosynthesis of phenolic monoterpenes natural products. Monoterpene synthase that catalyzes mainly the formation of olefins such as sabinene and beta-phellandrene, and minor amounts of other monoterpenes (e.g. myrcene, gamma-terpinene, alpha-thujene and alpha-pinene) from geranyl diphosphate (GPP). In Origanum vulgare (Wild marjoram), this protein is Beta-phellandrene synthase.